A 437-amino-acid polypeptide reads, in one-letter code: Zinc finger protein 491 (437 aa).

The C2H2-type 1; degenerate zinc finger occupies 35 to 59 (KSCESGTCGEIFMGYSSFNRNIRTD). The segment at 103–125 (FDCKECEKSFISPASIRRYMVTH) adopts a C2H2-type 2; degenerate zinc-finger fold. C2H2-type zinc fingers lie at residues 131 to 153 (YKCKFCGKALDCLSLYLTHERTH), 159 to 181 (YECKQCGKAFSWHSSVRIHERTH), 187 to 209 (YECKECGKSFNFSSSFRRHERTH), 215 to 237 (YKCKECGKAFNCPSSFHRHERTH), 243 to 265 (YECKLYGKALSRLISFRRHMRMH), 271 to 293 (HKCKICGKAFYSPSSFQRHERSH), 299 to 321 (YKCKQCGKAFTCSTSFQYHERTH), 327 to 349 (DGCKQCGKAFRSAKYIRIHGRTH), 355 to 377 (YECKQCGKAFHCVSSFHRHERTH), 383 to 405 (YECKHCGKAFTCSIYIRIHERIH), and 411 to 433 (YQCKECGKAFIRSSYCRKHERTH).

Belongs to the krueppel C2H2-type zinc-finger protein family.

Its subcellular location is the nucleus. May be involved in transcriptional regulation. This chain is Zinc finger protein 491 (ZNF491), found in Homo sapiens (Human).